The sequence spans 111 residues: Large ribosomal subunit protein eL31 (111 aa).

Belongs to the eukaryotic ribosomal protein eL31 family.

In Tetrahymena thermophila (strain SB210), this protein is Large ribosomal subunit protein eL31 (RPL31).